A 510-amino-acid chain; its full sequence is Aromatic-L-amino-acid decarboxylase (510 aa).

Over residues 1–17 the composition is skewed to polar residues; sequence MSHIPISNTIPTKQTDG. Residues 1-28 form a disordered region; it reads MSHIPISNTIPTKQTDGNGKANISPDKL. A substrate-binding site is contributed by T117. A183, S184, H227, D305, and N334 together coordinate pyridoxal 5'-phosphate. Substrate is bound at residue H227. Residue H227 is part of the active site. K337 carries the N6-(pyridoxal phosphate)lysine modification. The tract at residues 358-384 is disordered; it reads NAFNVDPLYLKHDMQGSAPDYRHWQIP.

Belongs to the group II decarboxylase family. Homodimer. The cofactor is pyridoxal 5'-phosphate. Hypoderm isoform is expressed only in hypodermal epithelium and the CNS isoform only in central nervous system. Expressed in the adult head (at protein level).

The catalysed reaction is L-dopa + H(+) = dopamine + CO2. It carries out the reaction 5-hydroxy-L-tryptophan + H(+) = serotonin + CO2. Its function is as follows. Catalyzes the decarboxylation of L-3,4-dihydroxyphenylalanine (L-DOPA) to dopamine and L-5-hydroxytryptophan (5-HTP) to serotonin. Catalyzes the formation of serotonin more efficiently than dopamine. Displays no activity to tyrosine. Variation in the synthesis of bioamines may be a factor contributing to natural variation in life span. The protein is Aromatic-L-amino-acid decarboxylase (Ddc) of Drosophila melanogaster (Fruit fly).